Here is a 204-residue protein sequence, read N- to C-terminus: Signal peptidase I (204 aa).

Topologically, residues 1 to 10 (MNSFKNFLKE) are cytoplasmic. The chain crosses the membrane as a helical span at residues 11 to 30 (WGLFLLILSLLALSRIFFWS). Over 31–204 (NVRVEGHSMD…LWPITRIGTF (174 aa)) the chain is Extracellular. Active-site residues include S38 and K76.

Belongs to the peptidase S26 family.

It is found in the cell membrane. The catalysed reaction is Cleavage of hydrophobic, N-terminal signal or leader sequences from secreted and periplasmic proteins.. This chain is Signal peptidase I (lepB), found in Streptococcus pneumoniae serotype 4 (strain ATCC BAA-334 / TIGR4).